A 140-amino-acid polypeptide reads, in one-letter code: Probable lipoprotein LppE (140 aa).

Positions 1–21 (MCNRLVTVTGVAMVVAAGLSA) are cleaved as a signal peptide. C22 is lipidated: N-palmitoyl cysteine. C22 carries S-diacylglycerol cysteine lipidation.

It belongs to the mycobacterial 19 kDa antigen family.

The protein resides in the cell membrane. The protein is Probable lipoprotein LppE (lppE) of Mycobacterium tuberculosis (strain ATCC 25618 / H37Rv).